Here is an 800-residue protein sequence, read N- to C-terminus: Phenylalanine--tRNA ligase beta subunit (800 aa).

The tRNA-binding domain maps to 39–154 (TKDIKNLVVG…ESQVPGTDAL (116 aa)). In terms of domain architecture, B5 spans 408–483 (AFITPIDITA…RIYGYDDIPS (76 aa)). Residues aspartate 461, aspartate 467, glutamate 470, and glutamate 471 each coordinate Mg(2+). An FDX-ACB domain is found at 708 to 800 (PRFPGMSRDI…ALIEQGAVIR (93 aa)).

Belongs to the phenylalanyl-tRNA synthetase beta subunit family. Type 1 subfamily. Tetramer of two alpha and two beta subunits. It depends on Mg(2+) as a cofactor.

It is found in the cytoplasm. It carries out the reaction tRNA(Phe) + L-phenylalanine + ATP = L-phenylalanyl-tRNA(Phe) + AMP + diphosphate + H(+). In Staphylococcus aureus, this protein is Phenylalanine--tRNA ligase beta subunit.